Consider the following 103-residue polypeptide: Small ribosomal subunit protein bS18c (103 aa).

This sequence belongs to the bacterial ribosomal protein bS18 family. As to quaternary structure, part of the 30S ribosomal subunit.

It localises to the plastid. The protein localises to the chloroplast. This chain is Small ribosomal subunit protein bS18c (rps18), found in Chlorella vulgaris (Green alga).